The sequence spans 227 residues: Phosphatidate cytidylyltransferase (227 aa).

The next 6 helical transmembrane spans lie at Phe-31–Met-51, Ile-65–Leu-85, Trp-93–Gly-113, Trp-131–Ile-151, Ile-165–Ile-185, and Gly-206–Ile-226.

Belongs to the CDS family.

The protein localises to the cell membrane. It catalyses the reaction a 1,2-diacyl-sn-glycero-3-phosphate + CTP + H(+) = a CDP-1,2-diacyl-sn-glycerol + diphosphate. It functions in the pathway phospholipid metabolism; CDP-diacylglycerol biosynthesis; CDP-diacylglycerol from sn-glycerol 3-phosphate: step 3/3. The sequence is that of Phosphatidate cytidylyltransferase (cdsA) from Rickettsia felis (strain ATCC VR-1525 / URRWXCal2) (Rickettsia azadi).